The chain runs to 127 residues: Large ribosomal subunit protein bL20 (127 aa).

The protein belongs to the bacterial ribosomal protein bL20 family.

In terms of biological role, binds directly to 23S ribosomal RNA and is necessary for the in vitro assembly process of the 50S ribosomal subunit. It is not involved in the protein synthesizing functions of that subunit. The chain is Large ribosomal subunit protein bL20 from Bifidobacterium animalis subsp. lactis (strain AD011).